A 186-amino-acid chain; its full sequence is MAQRTLVATFFLIFFLLTNLVCSKEIIVGGKTSSWKIPSSPSESLNKWAESLRFRVGDTLVWKYDEEKDSVLQVTKDAYINCNTTNPAANYSNGDTKVKLERSGPYFFISGSKSNCVEGEKLHIVVMSSRGGHTGGFFTGSSPSPAPSPALLGAPTVAPASGGSASSLTRQVGVLGFVGLLAIVLL.

The signal sequence occupies residues 1–23 (MAQRTLVATFFLIFFLLTNLVCS). In terms of domain architecture, Phytocyanin spans 24 to 128 (KEIIVGGKTS…GEKLHIVVMS (105 aa)). An intrachain disulfide couples Cys-82 to Cys-116. N-linked (GlcNAc...) asparagine glycosylation is found at Asn-83 and Asn-90. Ala-165 is lipidated: GPI-anchor amidated alanine. Residues 166-186 (SSLTRQVGVLGFVGLLAIVLL) constitute a propeptide, removed in mature form.

The protein belongs to the early nodulin-like (ENODL) family. In terms of tissue distribution, mostly expressed in seedlings, siliques and flowers, and, to a lower extent, in roots, stems and seeds, but barely in leaves.

Its subcellular location is the cell membrane. May act as a carbohydrate transporter. Required, together with ENODL11, ENODL12, ENODL13, ENODL14 and ENODL15, for male-female communication and pollen tube reception and burst at the synergid cell surface of the female gametophyte. The chain is Early nodulin-like protein 13 from Arabidopsis thaliana (Mouse-ear cress).